We begin with the raw amino-acid sequence, 205 residues long: Holliday junction branch migration complex subunit RuvA (205 aa).

The domain I stretch occupies residues 1–62 (MFEYVTGYVE…EDIMALYGFK (62 aa)). The domain II stretch occupies residues 63 to 141 (TREERLLFTK…DVVPDAFVDL (79 aa)). The segment at 142–152 (FSDEERFDEKK) is flexible linker. Residues 153–205 (GSSAELDEALEALRALGYAEREVSRVVPELLKESLTTDQYIKKALSLLLNGKR) are domain III.

Belongs to the RuvA family. Homotetramer. Forms an RuvA(8)-RuvB(12)-Holliday junction (HJ) complex. HJ DNA is sandwiched between 2 RuvA tetramers; dsDNA enters through RuvA and exits via RuvB. An RuvB hexamer assembles on each DNA strand where it exits the tetramer. Each RuvB hexamer is contacted by two RuvA subunits (via domain III) on 2 adjacent RuvB subunits; this complex drives branch migration. In the full resolvosome a probable DNA-RuvA(4)-RuvB(12)-RuvC(2) complex forms which resolves the HJ.

It localises to the cytoplasm. In terms of biological role, the RuvA-RuvB-RuvC complex processes Holliday junction (HJ) DNA during genetic recombination and DNA repair, while the RuvA-RuvB complex plays an important role in the rescue of blocked DNA replication forks via replication fork reversal (RFR). RuvA specifically binds to HJ cruciform DNA, conferring on it an open structure. The RuvB hexamer acts as an ATP-dependent pump, pulling dsDNA into and through the RuvAB complex. HJ branch migration allows RuvC to scan DNA until it finds its consensus sequence, where it cleaves and resolves the cruciform DNA. The chain is Holliday junction branch migration complex subunit RuvA from Bacillus cereus (strain AH187).